The chain runs to 89 residues: uncharacterized protein (89 aa).

The protein to M.tuberculosis Rv3402c.

This is an uncharacterized protein from Mycobacterium tuberculosis (strain CDC 1551 / Oshkosh).